Reading from the N-terminus, the 341-residue chain is Type II methyltransferase M.NgoPII (341 aa).

One can recognise an SAM-dependent MTase C5-type domain in the interval 12–341 (MKIISLFSGC…AAAIKKTLER (330 aa)). The active site involves Cys-84.

This sequence belongs to the class I-like SAM-binding methyltransferase superfamily. C5-methyltransferase family.

It carries out the reaction a 2'-deoxycytidine in DNA + S-adenosyl-L-methionine = a 5-methyl-2'-deoxycytidine in DNA + S-adenosyl-L-homocysteine + H(+). A methylase that recognizes the double-stranded sequence 5'-GGCC-3', methylates C-3 on both strands, and protects the DNA from cleavage by the NgoPII endonuclease. This chain is Type II methyltransferase M.NgoPII (ngoPIIM), found in Neisseria gonorrhoeae.